A 298-amino-acid chain; its full sequence is Adaptation to cold protein C (298 aa).

In terms of assembly, interacts with the C-terminal extension of AtcJ. Also interacts with AtcB, but not with AtcA.

With respect to regulation, interaction with AtcJ stabilizes AtcC. Its function is as follows. Involved in cold adaptation. This chain is Adaptation to cold protein C, found in Shewanella oneidensis (strain ATCC 700550 / JCM 31522 / CIP 106686 / LMG 19005 / NCIMB 14063 / MR-1).